A 119-amino-acid polypeptide reads, in one-letter code: Ribonuclease P protein component (119 aa).

It belongs to the RnpA family. In terms of assembly, consists of a catalytic RNA component (M1 or rnpB) and a protein subunit.

The enzyme catalyses Endonucleolytic cleavage of RNA, removing 5'-extranucleotides from tRNA precursor.. RNaseP catalyzes the removal of the 5'-leader sequence from pre-tRNA to produce the mature 5'-terminus. It can also cleave other RNA substrates such as 4.5S RNA. The protein component plays an auxiliary but essential role in vivo by binding to the 5'-leader sequence and broadening the substrate specificity of the ribozyme. In Listeria monocytogenes serotype 4b (strain CLIP80459), this protein is Ribonuclease P protein component.